Reading from the N-terminus, the 350-residue chain is Putative isomerase YbhH (350 aa).

It belongs to the PrpF family.

The chain is Putative isomerase YbhH (ybhH) from Escherichia coli O6:H1 (strain CFT073 / ATCC 700928 / UPEC).